The following is a 105-amino-acid chain: Met repressor (105 aa).

It belongs to the MetJ family. In terms of assembly, homodimer.

Its subcellular location is the cytoplasm. This regulatory protein, when combined with SAM (S-adenosylmethionine) represses the expression of the methionine regulon and of enzymes involved in SAM synthesis. This Citrobacter koseri (strain ATCC BAA-895 / CDC 4225-83 / SGSC4696) protein is Met repressor.